We begin with the raw amino-acid sequence, 168 residues long: Cyclin-dependent kinase 4 inhibitor C (168 aa).

4 ANK repeats span residues 4–33, 37–65, 69–98, and 102–132; these read PWGNELASAAARGDLEQLTSLLQNNVNVNA, FGRTALQVMKLGNPEIARRLLLRGANPDL, TGFAVIHDAARAGFLDTLQTLLEFQADVNI, and EGNLPLHLAAKEGHLRVVEFLVKHTASNVGH.

Belongs to the CDKN2 cyclin-dependent kinase inhibitor family. In terms of assembly, heterodimer of p18 with CDK6. In terms of tissue distribution, highest levels found in skeletal muscle. Also found in pancreas and heart.

Functionally, interacts strongly with CDK6, weakly with CDK4. Inhibits cell growth and proliferation with a correlated dependence on endogenous retinoblastoma protein RB. The chain is Cyclin-dependent kinase 4 inhibitor C (CDKN2C) from Homo sapiens (Human).